Here is a 267-residue protein sequence, read N- to C-terminus: Glutamate 5-kinase (267 aa).

K14 is an ATP binding site. Substrate is bound by residues S54, D141, and N157. ATP-binding positions include 177–178 and 219–225; these read SD and TGGMMSK.

Belongs to the glutamate 5-kinase family.

The protein localises to the cytoplasm. It catalyses the reaction L-glutamate + ATP = L-glutamyl 5-phosphate + ADP. It functions in the pathway amino-acid biosynthesis; L-proline biosynthesis; L-glutamate 5-semialdehyde from L-glutamate: step 1/2. In terms of biological role, catalyzes the transfer of a phosphate group to glutamate to form L-glutamate 5-phosphate. In Streptococcus thermophilus, this protein is Glutamate 5-kinase.